A 156-amino-acid chain; its full sequence is Small ribosomal subunit protein uS7 (156 aa).

It belongs to the universal ribosomal protein uS7 family. Part of the 30S ribosomal subunit. Contacts proteins S9 and S11.

One of the primary rRNA binding proteins, it binds directly to 16S rRNA where it nucleates assembly of the head domain of the 30S subunit. Is located at the subunit interface close to the decoding center, probably blocks exit of the E-site tRNA. The polypeptide is Small ribosomal subunit protein uS7 (Arthrobacter sp. (strain FB24)).